Reading from the N-terminus, the 156-residue chain is ATP synthase subunit b 2 (156 aa).

The chain crosses the membrane as a helical span at residues 7–29 (LLGQAISFAIFVWFCMKYVWPPV).

The protein belongs to the ATPase B chain family. As to quaternary structure, F-type ATPases have 2 components, F(1) - the catalytic core - and F(0) - the membrane proton channel. F(1) has five subunits: alpha(3), beta(3), gamma(1), delta(1), epsilon(1). F(0) has three main subunits: a(1), b(2) and c(10-14). The alpha and beta chains form an alternating ring which encloses part of the gamma chain. F(1) is attached to F(0) by a central stalk formed by the gamma and epsilon chains, while a peripheral stalk is formed by the delta and b chains.

The protein localises to the cell inner membrane. In terms of biological role, f(1)F(0) ATP synthase produces ATP from ADP in the presence of a proton or sodium gradient. F-type ATPases consist of two structural domains, F(1) containing the extramembraneous catalytic core and F(0) containing the membrane proton channel, linked together by a central stalk and a peripheral stalk. During catalysis, ATP synthesis in the catalytic domain of F(1) is coupled via a rotary mechanism of the central stalk subunits to proton translocation. Functionally, component of the F(0) channel, it forms part of the peripheral stalk, linking F(1) to F(0). The protein is ATP synthase subunit b 2 of Marinomonas sp. (strain MWYL1).